The sequence spans 237 residues: Ribosomal RNA small subunit methyltransferase G (237 aa).

S-adenosyl-L-methionine-binding positions include Gly78, Phe83, 129–130 (AE), and Arg148.

This sequence belongs to the methyltransferase superfamily. RNA methyltransferase RsmG family.

It localises to the cytoplasm. Specifically methylates the N7 position of a guanine in 16S rRNA. This chain is Ribosomal RNA small subunit methyltransferase G, found in Streptococcus pyogenes serotype M3 (strain ATCC BAA-595 / MGAS315).